A 403-amino-acid chain; its full sequence is Dynactin subunit 2-B (403 aa).

A disordered region spans residues 1–26 (MADPKYADLPGIARNEPDLYETSDLP). Residues 99–132 (PQQKYQRLLHEVQELTQEVEKTQSTLKESATEEK) adopt a coiled-coil conformation. The disordered stretch occupies residues 183 to 206 (AAKTRKDPEGKSSAKGPGPDNENL). Over residues 184–194 (AKTRKDPEGKS) the composition is skewed to basic and acidic residues. Residues 381–401 (KENLATVEDNFSSIDGRIKKL) adopt a coiled-coil conformation.

It belongs to the dynactin subunit 2 family. In terms of assembly, subunit of dynactin, a multiprotein complex part of a tripartite complex with dynein and a adapter, such as BICDL1, BICD2 or HOOK3. The dynactin complex is built around ACTR1A/ACTB filament and consists of an actin-related filament composed of a shoulder domain, a pointed end and a barbed end. Its length is defined by its flexible shoulder domain. The soulder is composed of 2 DCTN1 subunits, 4 DCTN2 and 2 DCTN3.

Its subcellular location is the cytoplasm. It is found in the cytoskeleton. The protein resides in the microtubule organizing center. The protein localises to the centrosome. It localises to the membrane. Part of the dynactin complex that activates the molecular motor dynein for ultra-processive transport along microtubules. In the dynactin soulder domain, binds the ACTR1A filament and acts as a molecular ruler to determine the length. Modulates cytoplasmic dynein binding to an organelle, and plays a role in prometaphase chromosome alignment and spindle organization during mitosis. Involved in anchoring microtubules to centrosomes. The chain is Dynactin subunit 2-B (dctn2-b) from Xenopus laevis (African clawed frog).